Consider the following 216-residue polypeptide: UDP-N-acetylglucosamine transferase subunit ALG14 (216 aa).

Over 1–3 (MVC) the chain is Lumenal. The chain crosses the membrane as a helical span at residues 4-24 (VLVLAAAAGAVAVFLILRIWV). The Cytoplasmic portion of the chain corresponds to 25 to 216 (VLRSMDVTPR…PKSVYLGRIV (192 aa)).

It belongs to the ALG14 family. In terms of assembly, forms with ALG13 the active heterodimeric UDP-N-acetylglucosamine transferase complex.

It localises to the endoplasmic reticulum membrane. Functionally, part of the UDP-N-acetylglucosamine transferase complex that operates in the biosynthetic pathway of dolichol-linked oligosaccharides, the glycan precursors employed in protein asparagine (N)-glycosylation. The assembly of dolichol-linked oligosaccharides begins on the cytosolic side of the endoplasmic reticulum membrane and finishes in its lumen. The sequential addition of sugars to dolichol pyrophosphate produces dolichol-linked oligosaccharides containing fourteen sugars, including two GlcNAcs, nine mannoses and three glucoses. Once assembled, the oligosaccharides are transferred from the lipid to nascent proteins by oligosaccharyltransferases. Functions as a protein-membrane adapter recruiting ALG13 at the cytoplasmic face of the endoplasmic reticulum, where the complex catalyzes the second step of dolichol pyrophosphate biosynthesis, transferring a beta1,4-linked N-acetylglucosamine (GlcNAc) from UDP-GlcNAc to GlcNAc-pyrophosphatedolichol (Gn-PDol) to produce N,N'-diacetylchitobiosyl diphosphodolichol. N,N'-diacetylchitobiosyl diphosphodolichol is a substrate for ALG1, the following enzyme in the biosynthetic pathway. The protein is UDP-N-acetylglucosamine transferase subunit ALG14 of Homo sapiens (Human).